Here is a 392-residue protein sequence, read N- to C-terminus: Anhydro-N-acetylmuramic acid kinase (392 aa).

22–29 (GTSMDGVD) is a binding site for ATP.

Belongs to the anhydro-N-acetylmuramic acid kinase family.

The catalysed reaction is 1,6-anhydro-N-acetyl-beta-muramate + ATP + H2O = N-acetyl-D-muramate 6-phosphate + ADP + H(+). It participates in amino-sugar metabolism; 1,6-anhydro-N-acetylmuramate degradation. It functions in the pathway cell wall biogenesis; peptidoglycan recycling. Functionally, catalyzes the specific phosphorylation of 1,6-anhydro-N-acetylmuramic acid (anhMurNAc) with the simultaneous cleavage of the 1,6-anhydro ring, generating MurNAc-6-P. Is required for the utilization of anhMurNAc either imported from the medium or derived from its own cell wall murein, and thus plays a role in cell wall recycling. The polypeptide is Anhydro-N-acetylmuramic acid kinase (Burkholderia mallei (strain NCTC 10229)).